The primary structure comprises 314 residues: Small ribosomal subunit biogenesis GTPase RsgA (314 aa).

The disordered stretch occupies residues 1–20 (MKRAPTKQPAKPAARGGERA). The 162-residue stretch at 85 to 246 (SDQFKSKLFA…LIDSPGFQEF (162 aa)) folds into the CP-type G domain. GTP-binding positions include 134 to 137 (NKID) and 188 to 196 (GQSGMGKST). Zn(2+) is bound by residues cysteine 270, cysteine 275, histidine 277, and cysteine 283.

Belongs to the TRAFAC class YlqF/YawG GTPase family. RsgA subfamily. As to quaternary structure, monomer. Associates with 30S ribosomal subunit, binds 16S rRNA. Zn(2+) is required as a cofactor.

It is found in the cytoplasm. Functionally, one of several proteins that assist in the late maturation steps of the functional core of the 30S ribosomal subunit. Helps release RbfA from mature subunits. May play a role in the assembly of ribosomal proteins into the subunit. Circularly permuted GTPase that catalyzes slow GTP hydrolysis, GTPase activity is stimulated by the 30S ribosomal subunit. This is Small ribosomal subunit biogenesis GTPase RsgA from Burkholderia pseudomallei (strain K96243).